The chain runs to 357 residues: Fructose-bisphosphate aldolase (357 aa).

Positions 49 and 140 each coordinate substrate. The active-site Proton acceptor is the E183. K225 serves as the catalytic Schiff-base intermediate with dihydroxyacetone-P.

Belongs to the class I fructose-bisphosphate aldolase family.

It catalyses the reaction beta-D-fructose 1,6-bisphosphate = D-glyceraldehyde 3-phosphate + dihydroxyacetone phosphate. It participates in carbohydrate degradation; glycolysis; D-glyceraldehyde 3-phosphate and glycerone phosphate from D-glucose: step 4/4. The protein is Fructose-bisphosphate aldolase (fba) of Dictyostelium discoideum (Social amoeba).